Reading from the N-terminus, the 195-residue chain is Peptidyl-tRNA hydrolase (195 aa).

Residue Y17 participates in tRNA binding. H22 functions as the Proton acceptor in the catalytic mechanism. TRNA contacts are provided by F68, N70, and N116.

Belongs to the PTH family. Monomer.

The protein resides in the cytoplasm. It catalyses the reaction an N-acyl-L-alpha-aminoacyl-tRNA + H2O = an N-acyl-L-amino acid + a tRNA + H(+). Its function is as follows. Hydrolyzes ribosome-free peptidyl-tRNAs (with 1 or more amino acids incorporated), which drop off the ribosome during protein synthesis, or as a result of ribosome stalling. In terms of biological role, catalyzes the release of premature peptidyl moieties from peptidyl-tRNA molecules trapped in stalled 50S ribosomal subunits, and thus maintains levels of free tRNAs and 50S ribosomes. This Pectobacterium carotovorum subsp. carotovorum (strain PC1) protein is Peptidyl-tRNA hydrolase.